The sequence spans 414 residues: MSGLDGGNKLPLAQTGGLAAPDHASGDPDRDQCQGLREETEATQVMANTGGGSLETVAEGGASQDPVDCGPALRVPVAGSRGGAATKAGQEDAPPSTKGLEAASAAEAADSSQKNGCQLGEPRGPAGQKALEACGAGGLGSQMIPGKKAKEVTTKKRAISAAVEKEGEAGAAMEEKKVVQKEKKVAGGVKEETRPRAPKINNCMDSLEAIDQELSNVNAQADRAFLQLERKFGRMRRLHMQRRSFIIQNIPGFWVTAFRNHPQLSPMISGQDEDMLRYMINLEVEELKHPRAGCKFKFIFQGNPYFRNEGLVKEYERRSSGRVVSLSTPIRWHRGQDPQAHIHRNREGNTIPSFFNWFSDHSLLEFDRIAEIIKGELWPNPLQYYLMGEGPRRGIRGPPRQPVESARSFRFQSG.

2 disordered regions span residues 1–129 (MSGL…AGQK) and 391–414 (PRRG…FQSG). A compositionally biased stretch (basic and acidic residues) spans 24-40 (ASGDPDRDQCQGLREET). A compositionally biased stretch (low complexity) spans 101–112 (EAASAAEAADSS).

Belongs to the nucleosome assembly protein (NAP) family.

The protein is Testis-specific Y-encoded-like protein 4 (TSPYL4) of Homo sapiens (Human).